The chain runs to 195 residues: PE-PGRS family protein PE_PGRS61 (195 aa).

This sequence belongs to the mycobacterial PE family. PGRS subfamily. As to quaternary structure, interacts with human TLR2.

The protein resides in the secreted. Its subcellular location is the cell wall. The protein localises to the cell surface. With respect to regulation, binding of Ca(2+) to PE_PGRS61 induces conformational changes and increases affinity for TLR2. Its function is as follows. Mediates Ca(2+)-dependent up-regulation of the anti-inflammatory cytokine IL-10. The protein is PE-PGRS family protein PE_PGRS61 of Mycobacterium tuberculosis (strain ATCC 25618 / H37Rv).